Consider the following 505-residue polypeptide: Histidine ammonia-lyase (505 aa).

The segment at residues A141–G143 is a cross-link (5-imidazolinone (Ala-Gly)). The residue at position 142 (S142) is a 2,3-didehydroalanine (Ser).

Belongs to the PAL/histidase family. Contains an active site 4-methylidene-imidazol-5-one (MIO), which is formed autocatalytically by cyclization and dehydration of residues Ala-Ser-Gly.

The protein localises to the cytoplasm. It catalyses the reaction L-histidine = trans-urocanate + NH4(+). Its pathway is amino-acid degradation; L-histidine degradation into L-glutamate; N-formimidoyl-L-glutamate from L-histidine: step 1/3. In Bacillus cereus (strain G9842), this protein is Histidine ammonia-lyase.